The chain runs to 323 residues: Acetyl-coenzyme A carboxylase carboxyl transferase subunit alpha (323 aa).

The CoA carboxyltransferase C-terminal domain maps to 35–296 (EVLSELDELR…GMTLKKCLDE (262 aa)).

The protein belongs to the AccA family. In terms of assembly, acetyl-CoA carboxylase is a heterohexamer composed of biotin carboxyl carrier protein (AccB), biotin carboxylase (AccC) and two subunits each of ACCase subunit alpha (AccA) and ACCase subunit beta (AccD).

It localises to the cytoplasm. The enzyme catalyses N(6)-carboxybiotinyl-L-lysyl-[protein] + acetyl-CoA = N(6)-biotinyl-L-lysyl-[protein] + malonyl-CoA. It functions in the pathway lipid metabolism; malonyl-CoA biosynthesis; malonyl-CoA from acetyl-CoA: step 1/1. In terms of biological role, component of the acetyl coenzyme A carboxylase (ACC) complex. First, biotin carboxylase catalyzes the carboxylation of biotin on its carrier protein (BCCP) and then the CO(2) group is transferred by the carboxyltransferase to acetyl-CoA to form malonyl-CoA. This chain is Acetyl-coenzyme A carboxylase carboxyl transferase subunit alpha, found in Aquifex aeolicus (strain VF5).